A 222-amino-acid chain; its full sequence is uncharacterized protein (222 aa).

The tract at residues 142-222 is disordered; that stretch reads ARRGGCVHPP…LPDPPSAGHL (81 aa). Residues 160–169 are compositionally biased toward low complexity; that stretch reads QSRSISSRRA. Residues 182 to 196 show a composition bias toward basic residues; sequence PRRRPHRHRTRPQTR.

It belongs to the Rv1128c/1148c/1588c/1702c/1945/3466 family.

This is an uncharacterized protein from Mycobacterium tuberculosis (strain CDC 1551 / Oshkosh).